Here is a 225-residue protein sequence, read N- to C-terminus: KDP operon transcriptional regulatory protein KdpE (225 aa).

One can recognise a Response regulatory domain in the interval 3-116; sequence NVLIVEDEQA…ELQARLRVAL (114 aa). Asp52 carries the 4-aspartylphosphate modification. Positions 126-225 form a DNA-binding region, ompR/PhoB-type; sequence DPLVKFSDVT…ETGIGYRFML (100 aa).

Phosphorylated by KdpD.

It is found in the cytoplasm. Its function is as follows. Member of the two-component regulatory system KdpD/KdpE involved in the regulation of the kdp operon. The chain is KDP operon transcriptional regulatory protein KdpE (kdpE) from Escherichia coli (strain K12).